Consider the following 428-residue polypeptide: Ribosome biogenesis protein WDR12 homolog (428 aa).

Residues 13–97 (LQVHFTTKQK…EDTIELEYVE (85 aa)) are ubiquitin-like (UBL) domain. WD repeat units lie at residues 109–146 (LHDD…KLTI), 148–190 (GHVA…NTAE), 197–236 (GHER…DKGE), 259–297 (GHRE…IKTE), 299–338 (TGNK…GNFV), 344–384 (GHSQ…APIF), and 388–426 (GHED…DNTK).

This sequence belongs to the WD repeat WDR12/YTM1 family.

It is found in the nucleus. The protein localises to the nucleolus. The protein resides in the nucleoplasm. In terms of biological role, required for maturation of ribosomal RNAs and formation of the large ribosomal subunit. This Anopheles gambiae (African malaria mosquito) protein is Ribosome biogenesis protein WDR12 homolog.